The following is a 318-amino-acid chain: N-acyl-aromatic-L-amino acid amidohydrolase (carboxylate-forming) (318 aa).

The interval Met1–Gln210 is hydrolytic domain. Zn(2+)-binding residues include His21 and Glu24. Substrate is bound by residues Arg63 and Asn70–Arg71. His116 lines the Zn(2+) pocket. 2 residues coordinate substrate: Glu177 and Tyr287. The tract at residues Gly211 to Pro318 is shielding domain. At Thr317 the chain carries Phosphothreonine.

The protein belongs to the AspA/AstE family. Aspartoacylase subfamily. In terms of assembly, exists as a mixture of homodimers and homotetramer, both catalytically active. Zn(2+) serves as cofactor. Expressed predominantly in kidney and to a lesser extent in liver. Weakly expressed in heart, small intestine, brain, lung, testis, and stomach.

It is found in the apical cell membrane. It localises to the cytoplasm. It carries out the reaction an N-acyl-aromatic L-alpha-amino acid + H2O = an aromatic L-alpha-amino acid + a carboxylate. The catalysed reaction is an N-acetyl-L-cysteine-S-conjugate + H2O = an S-substituted L-cysteine + acetate. Functionally, plays an important role in deacetylating mercapturic acids in kidney proximal tubules. Also acts on N-acetyl-aromatic amino acids. The chain is N-acyl-aromatic-L-amino acid amidohydrolase (carboxylate-forming) (Acy3) from Mus musculus (Mouse).